The following is a 316-amino-acid chain: tRNA dimethylallyltransferase (316 aa).

Position 19 to 26 (19 to 26) interacts with ATP; it reads GPTASGKT. Residue 21–26 participates in substrate binding; sequence TASGKT. 3 interaction with substrate tRNA regions span residues 44 to 47, 168 to 172, and 249 to 254; these read DSAL, QRITR, and RCVGYR.

Belongs to the IPP transferase family. As to quaternary structure, monomer. Mg(2+) is required as a cofactor.

The enzyme catalyses adenosine(37) in tRNA + dimethylallyl diphosphate = N(6)-dimethylallyladenosine(37) in tRNA + diphosphate. Its function is as follows. Catalyzes the transfer of a dimethylallyl group onto the adenine at position 37 in tRNAs that read codons beginning with uridine, leading to the formation of N6-(dimethylallyl)adenosine (i(6)A). The protein is tRNA dimethylallyltransferase of Colwellia psychrerythraea (strain 34H / ATCC BAA-681) (Vibrio psychroerythus).